A 351-amino-acid chain; its full sequence is Rhodopsin (351 aa).

Over 1–36 the chain is Extracellular; the sequence is MNGTEGQDFYVPMSNKTGVVRSPFEYPQYYLAEPWK. 2 N-linked (GlcNAc...) asparagine glycosylation sites follow: Asn2 and Asn15. A helical membrane pass occupies residues 37–61; it reads FSALAAYMFMLILLGFPVNFLTLYV. The Cytoplasmic segment spans residues 62-73; the sequence is TIQHKKLRTPLN. The chain crosses the membrane as a helical span at residues 74–96; the sequence is YILLNLVVADLFMVFGGFTTTMY. Residues 97–110 lie on the Extracellular side of the membrane; it reads TSMNGYFVFGVTGC. A disulfide bond links Cys110 and Cys187. A helical transmembrane segment spans residues 111 to 133; that stretch reads YIEGFFATLGGEIALWSLVVLAV. The 'Ionic lock' involved in activated form stabilization motif lies at 134 to 136; it reads ERY. The Cytoplasmic segment spans residues 134–152; the sequence is ERYVVVCKPMSNFRFGENH. A helical transmembrane segment spans residues 153-173; sequence AIMGVAFSWIMAMACAAPPLF. The Extracellular segment spans residues 174–202; it reads GWSRYIPEGMQCSCGIDYYTLKPEINNES. Residues 203-224 traverse the membrane as a helical segment; it reads FVIYMFVVHFMIPLAVIFFCYG. Residues 225 to 252 lie on the Cytoplasmic side of the membrane; that stretch reads NLVCTVKEAAAQQQESATTQKAEKEVTR. The chain crosses the membrane as a helical span at residues 253–274; that stretch reads MVIIMVIAFLICWVPYASVAFY. Topologically, residues 275–286 are extracellular; sequence IFTNQGSDFGPI. A helical membrane pass occupies residues 287 to 308; sequence FMTIPAFFAKSSAIYNPVIYIV. Lys296 bears the N6-(retinylidene)lysine mark. The Cytoplasmic segment spans residues 309–351; that stretch reads MNKQFRNCMITTLCCGKNPLGDEDTSAGKTETSSVSTSQVSPA. Residues Cys322 and Cys323 are each lipidated (S-palmitoyl cysteine). A disordered region spans residues 331-351; that stretch reads EDTSAGKTETSSVSTSQVSPA. Over residues 340–351 the composition is skewed to low complexity; the sequence is TSSVSTSQVSPA. Ser341 is subject to Phosphoserine; by RK and GRK7.

It belongs to the G-protein coupled receptor 1 family. Opsin subfamily. In terms of processing, contains one covalently linked retinal chromophore. Upon light absorption, the covalently bound 11-cis-retinal is converted to all-trans-retinal. After hydrolysis of the Schiff base and release of the covalently bound all-trans-retinal, active rhodopsin is regenerated by binding of a fresh molecule of 11-cis-retinal.

It localises to the membrane. It is found in the cell projection. The protein localises to the cilium. The protein resides in the photoreceptor outer segment. Its function is as follows. Photoreceptor required for image-forming vision at low light intensity. Required for photoreceptor cell viability after birth. Light-induced isomerization of 11-cis to all-trans retinal triggers a conformational change that activates signaling via G-proteins. Subsequent receptor phosphorylation mediates displacement of the bound G-protein alpha subunit by arrestin and terminates signaling. The chain is Rhodopsin (RHO) from Gallus gallus (Chicken).